Reading from the N-terminus, the 215-residue chain is RxLR effector protein PITG_00582 (215 aa).

The signal sequence occupies residues 1–19; sequence MLPYKTLLLALGFFFTVQC. Residues 39 to 51 carry the RxLR-dEER motif; the sequence is RLLRSPEKTDEER. Residues 81-149 adopt a coiled-coil conformation; that stretch reads VAKQAKEMSN…QNELEKLAKQ (69 aa).

Belongs to the RxLR effector family.

Its subcellular location is the secreted. The protein localises to the host cell membrane. Its function is as follows. Effector that might be involved in host plant infection. The chain is RxLR effector protein PITG_00582 from Phytophthora infestans (strain T30-4) (Potato late blight agent).